Reading from the N-terminus, the 332-residue chain is Biotin synthase (332 aa).

One can recognise a Radical SAM core domain in the interval 47 to 273 (YYGNKVKLNM…MNPTKEIRIA (227 aa)). Residues Cys65, Cys69, and Cys72 each contribute to the [4Fe-4S] cluster site. Cys109, Cys141, Cys201, and Arg271 together coordinate [2Fe-2S] cluster.

Belongs to the radical SAM superfamily. Biotin synthase family. Homodimer. The cofactor is [4Fe-4S] cluster. Requires [2Fe-2S] cluster as cofactor.

The catalysed reaction is (4R,5S)-dethiobiotin + (sulfur carrier)-SH + 2 reduced [2Fe-2S]-[ferredoxin] + 2 S-adenosyl-L-methionine = (sulfur carrier)-H + biotin + 2 5'-deoxyadenosine + 2 L-methionine + 2 oxidized [2Fe-2S]-[ferredoxin]. It functions in the pathway cofactor biosynthesis; biotin biosynthesis; biotin from 7,8-diaminononanoate: step 2/2. Catalyzes the conversion of dethiobiotin (DTB) to biotin by the insertion of a sulfur atom into dethiobiotin via a radical-based mechanism. The chain is Biotin synthase from Geobacillus thermodenitrificans (strain NG80-2).